A 297-amino-acid polypeptide reads, in one-letter code: Acetylglutamate kinase (297 aa).

Residues 68–69 (GG), Arg-90, and Asn-195 contribute to the substrate site.

The protein belongs to the acetylglutamate kinase family. ArgB subfamily.

The protein localises to the cytoplasm. It carries out the reaction N-acetyl-L-glutamate + ATP = N-acetyl-L-glutamyl 5-phosphate + ADP. The protein operates within amino-acid biosynthesis; L-arginine biosynthesis; N(2)-acetyl-L-ornithine from L-glutamate: step 2/4. Its function is as follows. Catalyzes the ATP-dependent phosphorylation of N-acetyl-L-glutamate. The sequence is that of Acetylglutamate kinase from Chelativorans sp. (strain BNC1).